Here is a 140-residue protein sequence, read N- to C-terminus: Endoribonuclease YbeY (140 aa).

Zn(2+) contacts are provided by His105, His109, and Asp115.

It belongs to the endoribonuclease YbeY family. Zn(2+) is required as a cofactor.

The protein resides in the cytoplasm. Its function is as follows. Single strand-specific metallo-endoribonuclease involved in late-stage 70S ribosome quality control and in maturation of the 3' terminus of the 16S rRNA. This Flavobacterium psychrophilum (strain ATCC 49511 / DSM 21280 / CIP 103535 / JIP02/86) protein is Endoribonuclease YbeY.